Reading from the N-terminus, the 67-residue chain is Large ribosomal subunit protein bL31 (67 aa).

Cys16, Cys18, Cys36, and Cys39 together coordinate Zn(2+).

This sequence belongs to the bacterial ribosomal protein bL31 family. Type A subfamily. In terms of assembly, part of the 50S ribosomal subunit. Zn(2+) serves as cofactor.

Functionally, binds the 23S rRNA. The chain is Large ribosomal subunit protein bL31 from Aliarcobacter butzleri (strain RM4018) (Arcobacter butzleri).